A 162-amino-acid chain; its full sequence is V-type proton ATPase subunit c' (162 aa).

Residues 1-11 are Lumenal-facing; sequence MSSNLCPIYSS. A helical membrane pass occupies residues 12 to 32; it reads FFGFAGVCASMVFSCLGAGYG. The Cytoplasmic segment spans residues 33–54; the sequence is TALAGRGIAAVGAFRPEIVMKS. A helical transmembrane segment spans residues 55–75; that stretch reads LIPVVMSGIIGVYGLVMSVLI. Residues 76–93 are Lumenal-facing; sequence AGDMSPDNDYSLFSGFIH. Residues 94 to 114 form a helical membrane-spanning segment; it reads LSAGLAVGLTGVAAGYAIGVV. Topologically, residues 115-132 are cytoplasmic; that stretch reads GDRGVQSFMRQDRIFVSM. The helical transmembrane segment at 133–153 threads the bilayer; it reads VLILIFAEVLGLYGLIVGLIL. Residues 154 to 162 are Lumenal-facing; that stretch reads QTKTSNVCY.

This sequence belongs to the V-ATPase proteolipid subunit family. V-ATPase is a heteromultimeric enzyme composed of a peripheral catalytic V1 complex (components A to H) attached to an integral membrane V0 proton pore complex (components: a, c, c', c'', d, e, f and VOA1). The decameric c-ring forms the proton-conducting pore, and is composed of eight proteolipid subunits c, one subunit c' and one subunit c''.

It localises to the vacuole membrane. In terms of biological role, proton-conducting pore forming subunit of the V0 complex of vacuolar(H+)-ATPase (V-ATPase), a multisubunit enzyme composed of a peripheral complex (V1) that hydrolyzes ATP and a membrane integral complex (V0) that translocates protons. V-ATPase is responsible for acidifying and maintaining the pH of intracellular compartments. This chain is V-type proton ATPase subunit c', found in Schizosaccharomyces pombe (strain 972 / ATCC 24843) (Fission yeast).